Reading from the N-terminus, the 238-residue chain is Ribonuclease PH (238 aa).

Residues Arg-86 and 124–126 contribute to the phosphate site; that span reads GTR.

It belongs to the RNase PH family. In terms of assembly, homohexameric ring arranged as a trimer of dimers.

The enzyme catalyses tRNA(n+1) + phosphate = tRNA(n) + a ribonucleoside 5'-diphosphate. In terms of biological role, phosphorolytic 3'-5' exoribonuclease that plays an important role in tRNA 3'-end maturation. Removes nucleotide residues following the 3'-CCA terminus of tRNAs; can also add nucleotides to the ends of RNA molecules by using nucleoside diphosphates as substrates, but this may not be physiologically important. Probably plays a role in initiation of 16S rRNA degradation (leading to ribosome degradation) during starvation. This is Ribonuclease PH from Haemophilus ducreyi (strain 35000HP / ATCC 700724).